We begin with the raw amino-acid sequence, 203 residues long: Pyridoxal 5'-phosphate synthase subunit PdxT (203 aa).

49 to 51 lines the L-glutamine pocket; that stretch reads GES. Cysteine 81 functions as the Nucleophile in the catalytic mechanism. L-glutamine contacts are provided by residues arginine 110 and 139–140; that span reads IR. Residues histidine 175 and glutamate 177 each act as charge relay system in the active site.

It belongs to the glutaminase PdxT/SNO family. In terms of assembly, in the presence of PdxS, forms a dodecamer of heterodimers. Only shows activity in the heterodimer.

The catalysed reaction is aldehydo-D-ribose 5-phosphate + D-glyceraldehyde 3-phosphate + L-glutamine = pyridoxal 5'-phosphate + L-glutamate + phosphate + 3 H2O + H(+). The enzyme catalyses L-glutamine + H2O = L-glutamate + NH4(+). It functions in the pathway cofactor biosynthesis; pyridoxal 5'-phosphate biosynthesis. Catalyzes the hydrolysis of glutamine to glutamate and ammonia as part of the biosynthesis of pyridoxal 5'-phosphate. The resulting ammonia molecule is channeled to the active site of PdxS. The chain is Pyridoxal 5'-phosphate synthase subunit PdxT from Parafrankia sp. (strain EAN1pec).